The chain runs to 290 residues: Phosphoribulokinase (290 aa).

Residue 12–20 (GSSGAGTTS) coordinates ATP.

Belongs to the phosphoribulokinase family.

The enzyme catalyses D-ribulose 5-phosphate + ATP = D-ribulose 1,5-bisphosphate + ADP + H(+). Its pathway is carbohydrate biosynthesis; Calvin cycle. The polypeptide is Phosphoribulokinase (cbbP) (Nitrobacter vulgaris).